Consider the following 570-residue polypeptide: Mitoguardin 1 (570 aa).

A helical transmembrane segment spans residues 34 to 54 (GLKKIIAVAAISGVSLIFLAC).

Belongs to the mitoguardin family. In terms of assembly, homodimer and heterodimer; forms heterodimers with miga2.

The protein localises to the mitochondrion outer membrane. Functionally, regulator of mitochondrial fusion: acts by forming homo- and heterodimers at the mitochondrial outer membrane and facilitating the formation of pld6/MitoPLD dimers. May act by regulating phospholipid metabolism via pld6/MitoPLD. The sequence is that of Mitoguardin 1 from Xenopus laevis (African clawed frog).